We begin with the raw amino-acid sequence, 445 residues long: tRNA-2-methylthio-N(6)-dimethylallyladenosine synthase (445 aa).

Residues 3-124 (KKLYIKTYGC…LPELISKVVR (122 aa)) form the MTTase N-terminal domain. Positions 12, 48, 87, 162, 166, and 169 each coordinate [4Fe-4S] cluster. Residues 148 to 380 (YPQGTSAFIS…QQELMAQQLA (233 aa)) enclose the Radical SAM core domain. Residues 383-445 (TSCVGSTMKV…SLNSLTGEIL (63 aa)) enclose the TRAM domain.

Belongs to the methylthiotransferase family. MiaB subfamily. As to quaternary structure, monomer. Requires [4Fe-4S] cluster as cofactor.

The protein localises to the cytoplasm. The catalysed reaction is N(6)-dimethylallyladenosine(37) in tRNA + (sulfur carrier)-SH + AH2 + 2 S-adenosyl-L-methionine = 2-methylsulfanyl-N(6)-dimethylallyladenosine(37) in tRNA + (sulfur carrier)-H + 5'-deoxyadenosine + L-methionine + A + S-adenosyl-L-homocysteine + 2 H(+). Its function is as follows. Catalyzes the methylthiolation of N6-(dimethylallyl)adenosine (i(6)A), leading to the formation of 2-methylthio-N6-(dimethylallyl)adenosine (ms(2)i(6)A) at position 37 in tRNAs that read codons beginning with uridine. The chain is tRNA-2-methylthio-N(6)-dimethylallyladenosine synthase from Rickettsia conorii (strain ATCC VR-613 / Malish 7).